The sequence spans 395 residues: Nickel and cobalt resistance protein CnrB (395 aa).

Residues 13 to 33 form a helical membrane-spanning segment; sequence MIAGVAAVAAAVGFGAAHLPV. The segment at 35–55 is disordered; sequence EKSPASTQAPEAQKPQSAPVK. Over residues 37 to 50 the composition is skewed to polar residues; the sequence is SPASTQAPEAQKPQ. Positions 140 to 193 form a coiled coil; it reads AAERKVAQAKADLARKTYEREASLFQQGVTPRQEMEAAKAALDVAQAEALRAAT.

The protein belongs to the membrane fusion protein (MFP) (TC 8.A.1) family.

It is found in the cell inner membrane. Functionally, the products of the genes cnrA, cnrB, and cnrC are likely to form a membrane-bound protein complex catalyzing an energy-dependent efflux of Ni(2+) and Co(2+). The mechanism of action of the CnrCBA complex may be that of a proton/cation antiporter. This is Nickel and cobalt resistance protein CnrB (cnrB) from Cupriavidus metallidurans (strain ATCC 43123 / DSM 2839 / NBRC 102507 / CH34) (Ralstonia metallidurans).